Here is a 433-residue protein sequence, read N- to C-terminus: 5-methylthioadenosine/S-adenosylhomocysteine deaminase (433 aa).

His62 and His64 together coordinate Zn(2+). Substrate is bound by residues Glu91, Arg143, and His183. His210 contributes to the Zn(2+) binding site. Substrate is bound by residues Glu213 and Asp298. Asp298 lines the Zn(2+) pocket.

This sequence belongs to the metallo-dependent hydrolases superfamily. MTA/SAH deaminase family. Zn(2+) serves as cofactor.

The catalysed reaction is S-adenosyl-L-homocysteine + H2O + H(+) = S-inosyl-L-homocysteine + NH4(+). The enzyme catalyses S-methyl-5'-thioadenosine + H2O + H(+) = S-methyl-5'-thioinosine + NH4(+). Catalyzes the deamination of 5-methylthioadenosine and S-adenosyl-L-homocysteine into 5-methylthioinosine and S-inosyl-L-homocysteine, respectively. Is also able to deaminate adenosine. The protein is 5-methylthioadenosine/S-adenosylhomocysteine deaminase of Caldanaerobacter subterraneus subsp. tengcongensis (strain DSM 15242 / JCM 11007 / NBRC 100824 / MB4) (Thermoanaerobacter tengcongensis).